Reading from the N-terminus, the 174-residue chain is Shikimate kinase 2 (174 aa).

12–17 (GAGKTT) is an ATP binding site. Residues T16 and D32 each contribute to the Mg(2+) site. Substrate-binding residues include D34, R58, and G79. Residues 112–126 (AEDPEEAQRPSLTGK) are LID domain. Residue R120 coordinates ATP. R139 serves as a coordination point for substrate. Q155 serves as a coordination point for ATP.

This sequence belongs to the shikimate kinase family. AroL subfamily. In terms of assembly, monomer. Requires Mg(2+) as cofactor.

It localises to the cytoplasm. The catalysed reaction is shikimate + ATP = 3-phosphoshikimate + ADP + H(+). The protein operates within metabolic intermediate biosynthesis; chorismate biosynthesis; chorismate from D-erythrose 4-phosphate and phosphoenolpyruvate: step 5/7. Its function is as follows. Catalyzes the specific phosphorylation of the 3-hydroxyl group of shikimic acid using ATP as a cosubstrate. This Yersinia pestis bv. Antiqua (strain Antiqua) protein is Shikimate kinase 2.